A 580-amino-acid chain; its full sequence is MSESSVNADTPKNTNDVLNGAYQSATTEPEGQYRSATDNPSLYQVPTHGSLYRNLSNSASAYYPANGNMNSREPANELSDISSLAEKGELEPPMAKLLSDPDFQGKQFPTVEAPELFIFELAPDSPSIALNWTFWRKMKTTSIYAYASLTIAWGSSVLSPASATLAKKYHIGMTTSLLNVSLFMLGYCLGPICWAPMSEITGRKTPLYIGLFLFSVFQIAVATAQDIQTIMICRFFGGYGACVPLCVVAAAFADMYPNRYRGTAITIFAAVIFVGPLVAPIVGGFLTKSYLGWRWTEYITSFMGFLSIILIYLFCEETYLKTITENKVQEYREITGNQLVHARSEEESLSARDIIMNYLLIPLKMLATEPIVFLVSLYCSFVYAIIYLLLEAYPVIFQEGRHFPLGVSALPYIGILVGVFIGCGINCLFEPWYFRQVIKAGNKPAPEARLPPMMIGSFLFPAGIFWLAWSGYYTYVHWIVPTLSGLLTGAGILLIFLQCLNYLLDAYLFRAASVFAANVIMRSAVAGGFPLFAVQMFHNMGVGWAGSLLGFIATALIPMPFAFFFFGKKIRAKSKMTAQF.

The span at 1 to 44 (MSESSVNADTPKNTNDVLNGAYQSATTEPEGQYRSATDNPSLYQ) shows a compositional bias: polar residues. The tract at residues 1-45 (MSESSVNADTPKNTNDVLNGAYQSATTEPEGQYRSATDNPSLYQV) is disordered. A Phosphoserine modification is found at Ser99. The next 12 helical transmembrane spans lie at 143 to 163 (IYAY…PASA), 177 to 197 (LLNV…WAPM), 207 to 227 (LYIG…AQDI), 235 to 255 (FFGG…FADM), 265 to 285 (ITIF…VGGF), 295 to 315 (WTEY…YLFC), 370 to 390 (PIVF…YLLL), 405 to 425 (LGVS…GCGI), 450 to 470 (LPPM…LAWS), 476 to 496 (VHWI…LLIF), 511 to 533 (AASV…PLFA), and 546 to 566 (GSLL…FFFF).

It belongs to the major facilitator superfamily. CAR1 family.

The protein resides in the membrane. This is an uncharacterized protein from Schizosaccharomyces pombe (strain 972 / ATCC 24843) (Fission yeast).